Here is a 946-residue protein sequence, read N- to C-terminus: MADEGGLETGAHDELKGTEEQAVNFAPSPDFLWLCEQLFAKIDHVQFERANNLLTKPVTARYYEVISNFTTLWRTTVGNNIYPALRLILPYRDRRVFNIKDYTLIKAICAFLKLPKDSSTEKKLINWKQDAGRSVRLSKFCVEEIKKRRSEPQIDRNERITIDDLNGYLDQLAIERTEQGRSFKNLANSDIMNKCLTSMTFLEMQYFFDILLKNRPLGGHEHKLLNCWHPDAQDYLSVVSDLETVAKRLWDPSQRLGNQDLKINIGLAFAPQLATKLHVSYQKIGEKLGWDFFIEEKMDGERIQMHYTNFGSDIKFYSRRATDYTYLYGNNLKTGTLANFINLNKNVKDCVLDCEVVTFDSNNKIVLPFGMVKSSAKNMLSQDGIDTQGFHPLLMVFDVLYLNGATLVDLPYYKRREYLKQILTPTAHRIEIIKSIRANDEQMIKKSLEKALSVGSEGIILKRYDSRYVIASRSDDWIKIKPEYLEQFGENMDLVLMGRDPSKKDSLMLGLLDYEEVIQDSPIMVNSQSSEENSQRFRGFVSLCIIANGISNEEYKEIDRKTKGLWNDSEKIPPLEYMKFGSKVPRQWIDPKKSLILEIKARSLDNTRSSERKFAAGCTLFGGYCRQIREDKNWKTCYTLQEFERAKSGNNWRKRGSSKPQKVISKKRRYNIISSVNKALEDFAELEHRSDIFDGMYFYVLSDYFDGVKRKRIKKSEIQKVIVANGGQLVQNVITRNYNLNDLRIISSRNTVECNSLIVRGYDIISPKWVFDCLLSGKIMKLEPSHCFNFSKQLMDYAYKRIDQYGDPYERDINKYEWSSLTSEKICTTAKQQPDVQFDNSLMDVPHFLFHGRIVFLLSDNNNIQKESFMVDAYGGKVTNELSSANLVIVVGAVTQRRINDIRKQISSEVIKQDHPPRIPDMVSEGWLYDCIKQNTQVAEDNYRLP.

Residues E295, K297, R302, E355, F397, E457, K462, K479, and K481 each contribute to the ATP site. Catalysis depends on K297, which acts as the N6-AMP-lysine intermediate. A Mg(2+)-binding site is contributed by E355. E457 serves as a coordination point for Mg(2+). BRCT domains follow at residues 688 to 787 (HRSD…PSHC) and 845 to 945 (VPHF…NYRL).

Belongs to the ATP-dependent DNA ligase family. The cofactor is Mg(2+).

The protein localises to the nucleus. The catalysed reaction is ATP + (deoxyribonucleotide)n-3'-hydroxyl + 5'-phospho-(deoxyribonucleotide)m = (deoxyribonucleotide)n+m + AMP + diphosphate.. Its function is as follows. DNA ligase involved in DNA non-homologous end joining (NHEJ); required for double-strand break (DSB) repair. In Candida glabrata (strain ATCC 2001 / BCRC 20586 / JCM 3761 / NBRC 0622 / NRRL Y-65 / CBS 138) (Yeast), this protein is DNA ligase 4 (LIG4).